The primary structure comprises 351 residues: MSNKAATLLAALSGAALVAAHGHVSHIIVNGVYYQNYDPTTHFYQPNPPTVIGWSALQQDNGFVEPNNFGTTDIICHKSAAPGGGSATVNAGDKISIVWTPEWPESHIGPVIDYLANCNGPCETVDKTSLRWFKIGGAGYNPNTRTWAADDLRANGNSWLVQIPADLKAGNYVLRHEIIALHGGSSPNGAQAYPQCLNLRIVGNGNNSPAGVAGTSLYRANDAGILFNPYVASPNYPVPGPALIAGAVSSIPQSKSTATRTASATLPGAPVVTPTAGPVVTTSSAPVVQPPTTTLVTVTSAPATSAAPAPTGGAGVAPKWGQCGGNGWTGPTVCASGSTCTVLNPYYSQCI.

Positions 1-20 (MSNKAATLLAALSGAALVAA) are cleaved as a signal peptide. Histidine 21 and histidine 107 together coordinate Cu(2+). A disulfide bond links cysteine 76 and cysteine 196. Residues histidine 182 and glutamine 191 each coordinate O2. A Cu(2+)-binding site is contributed by tyrosine 193. The 37-residue stretch at 315–351 (GVAPKWGQCGGNGWTGPTVCASGSTCTVLNPYYSQCI) folds into the CBM1 domain.

It belongs to the polysaccharide monooxygenase AA9 family. Requires Cu(2+) as cofactor.

It is found in the secreted. It carries out the reaction [(1-&gt;4)-beta-D-glucosyl]n+m + reduced acceptor + O2 = 4-dehydro-beta-D-glucosyl-[(1-&gt;4)-beta-D-glucosyl]n-1 + [(1-&gt;4)-beta-D-glucosyl]m + acceptor + H2O.. In terms of biological role, lytic polysaccharide monooxygenase (LPMO) that depolymerizes crystalline and amorphous polysaccharides via the oxidation of scissile alpha- or beta-(1-4)-glycosidic bonds, yielding C1 and C4 oxidation products. Catalysis by LPMOs requires the reduction of the active-site copper from Cu(II) to Cu(I) by a reducing agent and H(2)O(2) or O(2) as a cosubstrate. This Podospora anserina (strain S / ATCC MYA-4624 / DSM 980 / FGSC 10383) (Pleurage anserina) protein is AA9 family lytic polysaccharide monooxygenase A.